Here is a 256-residue protein sequence, read N- to C-terminus: tRNA pseudouridine synthase A (256 aa).

Asp52 acts as the Nucleophile in catalysis. Tyr110 provides a ligand contact to substrate.

The protein belongs to the tRNA pseudouridine synthase TruA family. As to quaternary structure, homodimer.

It carries out the reaction uridine(38/39/40) in tRNA = pseudouridine(38/39/40) in tRNA. Its function is as follows. Formation of pseudouridine at positions 38, 39 and 40 in the anticodon stem and loop of transfer RNAs. This Stenotrophomonas maltophilia (strain R551-3) protein is tRNA pseudouridine synthase A.